Consider the following 344-residue polypeptide: C-C chemokine receptor-like 2 (344 aa).

Over 1–43 (MANYTLAPEDEYDVLIEGELESDEAEQCDKYDAQALSAQLVPS) the chain is Extracellular. Asn-3 carries N-linked (GlcNAc...) asparagine glycosylation. Residues 44–64 (LCSAVFVIGVLDNLLVVLILV) form a helical membrane-spanning segment. Topologically, residues 65–74 (KYKGLKRVEN) are cytoplasmic. The helical transmembrane segment at 75–95 (IYLLNLAVSNLCFLLTLPFWA) threads the bilayer. Residues 96 to 104 (HAGGDPMCK) lie on the Extracellular side of the membrane. Cysteines 103 and 181 form a disulfide. A helical membrane pass occupies residues 105 to 125 (ILIGLYFVGLYSETFFNCLLT). Residues 126 to 144 (VQRYLVFLHKGNFFSARRR) are Cytoplasmic-facing. A helical transmembrane segment spans residues 145-165 (VPCGIITSVLAWVTAILATLP). The Extracellular segment spans residues 166–198 (EFVVYKPQMEDQKYKCAFSRTPFLPADETFWKH). The chain crosses the membrane as a helical span at residues 199 to 219 (FLTLKMNISVLVLPLFIFTFL). Topologically, residues 220-238 (YVQMRKTLRFREQRYSLFK) are cytoplasmic. A helical membrane pass occupies residues 239-259 (LVFAIMVVFLLMWAPYNIAFF). Residues 260–286 (LSTFKEHFSLSDCKSSYNLDKSVHITK) lie on the Extracellular side of the membrane. A helical membrane pass occupies residues 287 to 307 (LIATTHCCINPLLYAFLDGTF). At 308–344 (SKYLCRCFHLRSNTPLQPRGQSAQGTSREEPDHSTEV) the chain is on the cytoplasmic side. Over residues 324–333 (QPRGQSAQGT) the composition is skewed to polar residues. Residues 324–344 (QPRGQSAQGTSREEPDHSTEV) form a disordered region. The segment covering 334–344 (SREEPDHSTEV) has biased composition (basic and acidic residues).

It belongs to the G-protein coupled receptor 1 family. Expressed abundantly in immunal tissues such as spleen, fetal liver, lymph node and bone marrow. Strong expression also in lung and heart. Expressed in almost all hematopoietic cells including monocytes, macrophages, PMNs, T-cells (both CD4+ and CD8+), monocyte-derived iDCs, NK cells, and CD34+ progenitor cells. B-cells expressed isoform 1 but not isoform 2. Up-regulated on synovial neutrophils of rheumatoid arthritis patients.

Its subcellular location is the cell membrane. Its function is as follows. Receptor for CCL19 and chemerin/RARRES2. Does not appear to be a signaling receptor, but may have a role in modulating chemokine-triggered immune responses by capturing and internalizing CCL19 or by presenting RARRES2 ligand to CMKLR1, a functional signaling receptors. Plays a critical role for the development of Th2 responses. This is C-C chemokine receptor-like 2 (CCRL2) from Homo sapiens (Human).